Here is an 89-residue protein sequence, read N- to C-terminus: Small ribosomal subunit protein uS14 (89 aa).

Belongs to the universal ribosomal protein uS14 family. In terms of assembly, part of the 30S ribosomal subunit. Contacts proteins S3 and S10.

Its function is as follows. Binds 16S rRNA, required for the assembly of 30S particles and may also be responsible for determining the conformation of the 16S rRNA at the A site. The protein is Small ribosomal subunit protein uS14 of Chlorobium phaeobacteroides (strain BS1).